A 267-amino-acid polypeptide reads, in one-letter code: Small ribosomal subunit protein uS2 (267 aa).

The segment at 224-244 (GRQGEDEDVTEDSFKDNKDAK) is disordered. A compositionally biased stretch (basic and acidic residues) spans 235 to 244 (DSFKDNKDAK).

The protein belongs to the universal ribosomal protein uS2 family.

The protein is Small ribosomal subunit protein uS2 of Lactiplantibacillus plantarum (strain ATCC BAA-793 / NCIMB 8826 / WCFS1) (Lactobacillus plantarum).